A 389-amino-acid chain; its full sequence is Anhydro-N-acetylmuramic acid kinase (389 aa).

11–18 (GTSLDGVD) contacts ATP.

This sequence belongs to the anhydro-N-acetylmuramic acid kinase family.

The enzyme catalyses 1,6-anhydro-N-acetyl-beta-muramate + ATP + H2O = N-acetyl-D-muramate 6-phosphate + ADP + H(+). It participates in amino-sugar metabolism; 1,6-anhydro-N-acetylmuramate degradation. It functions in the pathway cell wall biogenesis; peptidoglycan recycling. In terms of biological role, catalyzes the specific phosphorylation of 1,6-anhydro-N-acetylmuramic acid (anhMurNAc) with the simultaneous cleavage of the 1,6-anhydro ring, generating MurNAc-6-P. Is required for the utilization of anhMurNAc either imported from the medium or derived from its own cell wall murein, and thus plays a role in cell wall recycling. The chain is Anhydro-N-acetylmuramic acid kinase from Albidiferax ferrireducens (strain ATCC BAA-621 / DSM 15236 / T118) (Rhodoferax ferrireducens).